A 413-amino-acid chain; its full sequence is Argininosuccinate synthase (413 aa).

A22–S30 provides a ligand contact to ATP. Positions 100 and 105 each coordinate L-citrulline. Residue G130 coordinates ATP. Residues T132, N136, and D137 each coordinate L-aspartate. Position 136 (N136) interacts with L-citrulline. L-citrulline-binding residues include R140, S189, S198, E274, and Y286.

This sequence belongs to the argininosuccinate synthase family. Type 1 subfamily. As to quaternary structure, homotetramer.

Its subcellular location is the cytoplasm. The catalysed reaction is L-citrulline + L-aspartate + ATP = 2-(N(omega)-L-arginino)succinate + AMP + diphosphate + H(+). It functions in the pathway amino-acid biosynthesis; L-arginine biosynthesis; L-arginine from L-ornithine and carbamoyl phosphate: step 2/3. The protein is Argininosuccinate synthase of Endomicrobium trichonymphae.